A 140-amino-acid polypeptide reads, in one-letter code: 3-hydroxyacyl-[acyl-carrier-protein] dehydratase FabZ (140 aa).

The active site involves H47.

It belongs to the thioester dehydratase family. FabZ subfamily.

The protein resides in the cytoplasm. It catalyses the reaction a (3R)-hydroxyacyl-[ACP] = a (2E)-enoyl-[ACP] + H2O. Involved in unsaturated fatty acids biosynthesis. Catalyzes the dehydration of short chain beta-hydroxyacyl-ACPs and long chain saturated and unsaturated beta-hydroxyacyl-ACPs. The chain is 3-hydroxyacyl-[acyl-carrier-protein] dehydratase FabZ from Streptococcus pneumoniae serotype 2 (strain D39 / NCTC 7466).